The following is a 198-amino-acid chain: Na(+)-translocating NADH-quinone reductase subunit E (198 aa).

The next 6 membrane-spanning stretches (helical) occupy residues 11–31 (AVFV…FLAV), 35–55 (VSTA…SVPA), 77–97 (FLNF…LEMI), 109–129 (LGIF…VSFM), 140–160 (IVYG…LAGI), and 176–196 (LGIT…FAGV).

The protein belongs to the NqrDE/RnfAE family. Composed of six subunits; NqrA, NqrB, NqrC, NqrD, NqrE and NqrF.

Its subcellular location is the cell inner membrane. The catalysed reaction is a ubiquinone + n Na(+)(in) + NADH + H(+) = a ubiquinol + n Na(+)(out) + NAD(+). Functionally, NQR complex catalyzes the reduction of ubiquinone-1 to ubiquinol by two successive reactions, coupled with the transport of Na(+) ions from the cytoplasm to the periplasm. NqrA to NqrE are probably involved in the second step, the conversion of ubisemiquinone to ubiquinol. In Yersinia pestis bv. Antiqua (strain Nepal516), this protein is Na(+)-translocating NADH-quinone reductase subunit E.